Reading from the N-terminus, the 500-residue chain is Probable cytosol aminopeptidase (500 aa).

Residues Lys265 and Asp270 each coordinate Mn(2+). Residue Lys277 is part of the active site. Mn(2+)-binding residues include Asp288, Asp347, and Glu349. The active site involves Arg351.

It belongs to the peptidase M17 family. Mn(2+) serves as cofactor.

The protein resides in the cytoplasm. It catalyses the reaction Release of an N-terminal amino acid, Xaa-|-Yaa-, in which Xaa is preferably Leu, but may be other amino acids including Pro although not Arg or Lys, and Yaa may be Pro. Amino acid amides and methyl esters are also readily hydrolyzed, but rates on arylamides are exceedingly low.. The catalysed reaction is Release of an N-terminal amino acid, preferentially leucine, but not glutamic or aspartic acids.. Presumably involved in the processing and regular turnover of intracellular proteins. Catalyzes the removal of unsubstituted N-terminal amino acids from various peptides. The sequence is that of Probable cytosol aminopeptidase from Corynebacterium glutamicum (strain ATCC 13032 / DSM 20300 / JCM 1318 / BCRC 11384 / CCUG 27702 / LMG 3730 / NBRC 12168 / NCIMB 10025 / NRRL B-2784 / 534).